The following is a 207-amino-acid chain: NADH-quinone oxidoreductase subunit A (207 aa).

3 helical membrane-spanning segments follow: residues 6–26, 62–82, and 87–107; these read LSAI…LVVP, LVAI…AYAV, and AGWL…IGLV.

The protein belongs to the complex I subunit 3 family. As to quaternary structure, NDH-1 is composed of 14 different subunits. Subunits NuoA, H, J, K, L, M, N constitute the membrane sector of the complex.

It is found in the cell inner membrane. It carries out the reaction a quinone + NADH + 5 H(+)(in) = a quinol + NAD(+) + 4 H(+)(out). In terms of biological role, NDH-1 shuttles electrons from NADH, via FMN and iron-sulfur (Fe-S) centers, to quinones in the respiratory chain. The immediate electron acceptor for the enzyme in this species is believed to be ubiquinone. Couples the redox reaction to proton translocation (for every two electrons transferred, four hydrogen ions are translocated across the cytoplasmic membrane), and thus conserves the redox energy in a proton gradient. The sequence is that of NADH-quinone oxidoreductase subunit A from Psychrobacter cryohalolentis (strain ATCC BAA-1226 / DSM 17306 / VKM B-2378 / K5).